Consider the following 105-residue polypeptide: ATP-dependent Clp protease adapter protein ClpS (105 aa).

This sequence belongs to the ClpS family. Binds to the N-terminal domain of the chaperone ClpA.

Functionally, involved in the modulation of the specificity of the ClpAP-mediated ATP-dependent protein degradation. This Klebsiella pneumoniae (strain 342) protein is ATP-dependent Clp protease adapter protein ClpS.